Here is a 319-residue protein sequence, read N- to C-terminus: Ornithine carbamoyltransferase (319 aa).

Carbamoyl phosphate is bound by residues 63–66, Gln-90, Arg-114, and 141–144; these read STRT and HPCQ. L-ornithine is bound by residues Asn-172, Asp-236, and 240 to 241; that span reads SM. Carbamoyl phosphate is bound by residues 276–277 and Arg-304; that span reads CL.

This sequence belongs to the aspartate/ornithine carbamoyltransferase superfamily. OTCase family.

It localises to the cytoplasm. It carries out the reaction carbamoyl phosphate + L-ornithine = L-citrulline + phosphate + H(+). Its pathway is amino-acid biosynthesis; L-arginine biosynthesis; L-arginine from L-ornithine and carbamoyl phosphate: step 1/3. In terms of biological role, reversibly catalyzes the transfer of the carbamoyl group from carbamoyl phosphate (CP) to the N(epsilon) atom of ornithine (ORN) to produce L-citrulline. This chain is Ornithine carbamoyltransferase, found in Halalkalibacterium halodurans (strain ATCC BAA-125 / DSM 18197 / FERM 7344 / JCM 9153 / C-125) (Bacillus halodurans).